A 237-amino-acid polypeptide reads, in one-letter code: Ribonuclease 3 (237 aa).

The RNase III domain occupies Val5–Gly136. Residue Glu49 participates in Mg(2+) binding. Residue Asp53 is part of the active site. Positions 122 and 125 each coordinate Mg(2+). Glu125 is a catalytic residue. The DRBM domain occupies Asp163–Gly232. A compositionally biased stretch (basic and acidic residues) spans Ile185–Gly208. A disordered region spans residues Ile185–Arg237. Residues Gln216–Glu231 are compositionally biased toward low complexity.

Belongs to the ribonuclease III family. Homodimer. Mg(2+) serves as cofactor.

The protein localises to the cytoplasm. It carries out the reaction Endonucleolytic cleavage to 5'-phosphomonoester.. Its function is as follows. Digests double-stranded RNA. Involved in the processing of primary rRNA transcript to yield the immediate precursors to the large and small rRNAs (23S and 16S). Processes some mRNAs, and tRNAs when they are encoded in the rRNA operon. Processes pre-crRNA and tracrRNA of type II CRISPR loci if present in the organism. This is Ribonuclease 3 from Roseiflexus sp. (strain RS-1).